A 117-amino-acid chain; its full sequence is Venom nerve growth factor (117 aa).

3 disulfide bridges follow: cysteine 12–cysteine 77, cysteine 55–cysteine 105, and cysteine 65–cysteine 107. N-linked (GlcNAc...) asparagine glycosylation is present at asparagine 21.

The protein belongs to the NGF-beta family. In terms of assembly, homodimer; non-covalently linked. Expressed by the venom gland.

It is found in the secreted. Nerve growth factor is important for the development and maintenance of the sympathetic and sensory nervous systems. It stimulates division and differentiation of sympathetic and embryonic sensory neurons as well as basal forebrain cholinergic neurons in the brain. Its relevance in the snake venom is not clear. However, it has been shown to inhibit metalloproteinase-dependent proteolysis of platelet glycoprotein Ib alpha, suggesting a metalloproteinase inhibition to prevent metalloprotease autodigestion and/or protection against prey proteases. Binds a lipid between the two protein chains in the homodimer. The lipid-bound form promotes histamine relase from mouse mast cells, contrary to the lipid-free form. The chain is Venom nerve growth factor from Daboia russelii (Russel's viper).